The primary structure comprises 577 residues: Arginine--tRNA ligase (577 aa).

Residues P122–H132 carry the 'HIGH' region motif.

The protein belongs to the class-I aminoacyl-tRNA synthetase family. Monomer.

Its subcellular location is the cytoplasm. It carries out the reaction tRNA(Arg) + L-arginine + ATP = L-arginyl-tRNA(Arg) + AMP + diphosphate. The chain is Arginine--tRNA ligase from Salmonella newport (strain SL254).